A 130-amino-acid chain; its full sequence is Small ribosomal subunit protein uS8 (130 aa).

The protein belongs to the universal ribosomal protein uS8 family. Part of the 30S ribosomal subunit. Contacts proteins S5 and S12.

In terms of biological role, one of the primary rRNA binding proteins, it binds directly to 16S rRNA central domain where it helps coordinate assembly of the platform of the 30S subunit. The chain is Small ribosomal subunit protein uS8 from Yersinia pseudotuberculosis serotype O:1b (strain IP 31758).